A 269-amino-acid polypeptide reads, in one-letter code: Adenylate kinase (269 aa).

Position 61 to 66 (61 to 66 (GAGKGT)) interacts with ATP. An NMP region spans residues 81-110 (ATGDMLREQVARQTELGKAAKQIMDQGGLV). AMP-binding positions include Thr-82, Arg-87, 108–110 (GLV), 137–140 (GFPR), and Gln-144. Residues 178 to 215 (GRLVHPASGRSYHKEFNPPKKPMTDDITGEPLIQRSDD) are LID. Residues Arg-179 and 188–189 (SY) contribute to the ATP site. Residues Arg-212 and Arg-223 each contribute to the AMP site. Residue Gln-251 participates in ATP binding.

It belongs to the adenylate kinase family. AK2 subfamily. Monomer.

It localises to the cytoplasm. The protein resides in the cytosol. The protein localises to the mitochondrion intermembrane space. It carries out the reaction AMP + ATP = 2 ADP. Catalyzes the reversible transfer of the terminal phosphate group between ATP and AMP. Plays an important role in cellular energy homeostasis and in adenine nucleotide metabolism. Adenylate kinase activity is critical for regulation of the phosphate utilization and the AMP de novo biosynthesis pathways. This chain is Adenylate kinase, found in Cryptococcus neoformans var. neoformans serotype D (strain B-3501A) (Filobasidiella neoformans).